Consider the following 161-residue polypeptide: Protein ilm1 (161 aa).

The Cytoplasmic segment spans residues 1-6 (MLFSFR). Residues 7-27 (AIVLFYCCMLTFAGIGFLWNP) form a helical membrane-spanning segment. The Lumenal portion of the chain corresponds to 28–56 (KFVVESGLVALIGASMEVKPLIVTQDNLS). A helical membrane pass occupies residues 57–77 (TLALSGLVFLILGMIYTISLL). At 78 to 81 (QSNF) the chain is on the cytoplasmic side. A helical transmembrane segment spans residues 82–102 (LFFSGITPIRAIFDFILTGFI). At 103–112 (YLKKEHIASN) the chain is on the lumenal side. The chain crosses the membrane as a helical span at residues 113-133 (SLTFTFAFCDLMWQFWMFAAM). Residues 134-161 (SEERAKYLKNQKKAEELAARKAREVEES) lie on the Cytoplasmic side of the membrane.

It belongs to the ILM1 family.

Its subcellular location is the endoplasmic reticulum. It localises to the membrane. The polypeptide is Protein ilm1 (Schizosaccharomyces pombe (strain 972 / ATCC 24843) (Fission yeast)).